Reading from the N-terminus, the 160-residue chain is Lipoprotein signal peptidase (160 aa).

A run of 3 helical transmembrane segments spans residues 13–33 (IYIT…RLII), 72–92 (WFLS…ITKL), and 104–124 (SLII…GFVV). Active-site residues include D125 and D143. Residues 134-154 (WHFATFNIADCSIFIGIIILM) traverse the membrane as a helical segment.

Belongs to the peptidase A8 family.

It is found in the cell inner membrane. The enzyme catalyses Release of signal peptides from bacterial membrane prolipoproteins. Hydrolyzes -Xaa-Yaa-Zaa-|-(S,diacylglyceryl)Cys-, in which Xaa is hydrophobic (preferably Leu), and Yaa (Ala or Ser) and Zaa (Gly or Ala) have small, neutral side chains.. Its pathway is protein modification; lipoprotein biosynthesis (signal peptide cleavage). Functionally, this protein specifically catalyzes the removal of signal peptides from prolipoproteins. In Buchnera aphidicola subsp. Acyrthosiphon pisum (strain APS) (Acyrthosiphon pisum symbiotic bacterium), this protein is Lipoprotein signal peptidase.